The primary structure comprises 469 residues: Tetratricopeptide repeat protein 38 (469 aa).

TPR repeat units lie at residues 107 to 140, 179 to 212, and 251 to 284; these read REML…HPTD, SYVK…DQTD, and CHVY…QCFA.

Belongs to the TTC38 family.

The chain is Tetratricopeptide repeat protein 38 (ttc38) from Xenopus tropicalis (Western clawed frog).